We begin with the raw amino-acid sequence, 1113 residues long: Centrosomal protein of 131 kDa (1113 aa).

Disordered regions lie at residues 78–97 (RRSN…LSSE) and 232–267 (KSQK…TEEE). Residues 79 to 97 (RSNSTTQVNQQANTSLSSE) show a composition bias toward polar residues. Over residues 238-257 (SSASSSSNNNAPRSPRSPGQ) the composition is skewed to low complexity. The stretch at 259 to 371 (RRREVTEEEA…QQIAEQETEA (113 aa)) forms a coiled coil. Residues 276–296 (NHAAIIIQRWYRRHVNSKRAN) enclose the IQ domain. 3 disordered regions span residues 306-331 (SKKK…EDDR), 368-401 (ETEA…NTDS), and 438-458 (SVSM…SKTT). Positions 307–331 (KKKEREQRAEEAKTTESLKKKEDDR) are enriched in basic and acidic residues. A compositionally biased stretch (basic residues) spans 374–384 (HPGKVGRKKLT). Low complexity predominate over residues 446–458 (QGASSSRAQSKTT). Residues 580–1111 (SMMRLRLELD…LLEQQRKQLL (532 aa)) are a coiled coil.

It belongs to the CEP131 family.

The protein localises to the chromosome. Its subcellular location is the centromere. It is found in the cytoplasm. It localises to the cytoskeleton. The protein resides in the microtubule organizing center. The protein localises to the centrosome. Its subcellular location is the centriolar satellite. It is found in the cilium basal body. It localises to the cytoplasmic vesicle. The protein resides in the secretory vesicle. The protein localises to the acrosome. In terms of biological role, cilium-specific protein required for the regulation of cilium/flagellum formation. Involved in centriole duplication. May play a role in melanosome trafficking. The protein is Centrosomal protein of 131 kDa (cep131) of Danio rerio (Zebrafish).